Consider the following 931-residue polypeptide: Bifunctional glutamine synthetase adenylyltransferase/adenylyl-removing enzyme (931 aa).

The tract at residues 1–434 is adenylyl removase; that stretch reads MTLAPADLPV…STEFAALLAP (434 aa). The interval 441–931 is adenylyl transferase; that stretch reads PDALANYWRS…ACRAAELPFA (491 aa).

This sequence belongs to the GlnE family. The cofactor is Mg(2+).

It carries out the reaction [glutamine synthetase]-O(4)-(5'-adenylyl)-L-tyrosine + phosphate = [glutamine synthetase]-L-tyrosine + ADP. The enzyme catalyses [glutamine synthetase]-L-tyrosine + ATP = [glutamine synthetase]-O(4)-(5'-adenylyl)-L-tyrosine + diphosphate. Involved in the regulation of glutamine synthetase GlnA, a key enzyme in the process to assimilate ammonia. When cellular nitrogen levels are high, the C-terminal adenylyl transferase (AT) inactivates GlnA by covalent transfer of an adenylyl group from ATP to specific tyrosine residue of GlnA, thus reducing its activity. Conversely, when nitrogen levels are low, the N-terminal adenylyl removase (AR) activates GlnA by removing the adenylyl group by phosphorolysis, increasing its activity. The regulatory region of GlnE binds the signal transduction protein PII (GlnB) which indicates the nitrogen status of the cell. The chain is Bifunctional glutamine synthetase adenylyltransferase/adenylyl-removing enzyme from Stenotrophomonas maltophilia (strain K279a).